The primary structure comprises 125 residues: Glutamyl-tRNA(Gln) amidotransferase subunit C, mitochondrial (125 aa).

It belongs to the GatC family. Subunit of the heterotrimeric GatCAB amidotransferase (AdT) complex, composed of A, B and C subunits.

It localises to the mitochondrion. It carries out the reaction L-glutamyl-tRNA(Gln) + L-glutamine + ATP + H2O = L-glutaminyl-tRNA(Gln) + L-glutamate + ADP + phosphate + H(+). Allows the formation of correctly charged Gln-tRNA(Gln) through the transamidation of misacylated Glu-tRNA(Gln) in the mitochondria. The reaction takes place in the presence of glutamine and ATP through an activated gamma-phospho-Glu-tRNA(Gln). This chain is Glutamyl-tRNA(Gln) amidotransferase subunit C, mitochondrial, found in Drosophila mojavensis (Fruit fly).